The following is a 761-amino-acid chain: MRYNQLSYIPTSLETAVAELQALGFAVQQEQAPKENFAIFLRKLFFHFQDTDYPLSHMIASKDLDLLTFLTSDATLTKEVFDLVALQVLGFIPAVDFTDAQDFIQKIGFPIVFDSQQLLLNLHQLLATRQKSGVTLIDSLVSQGLLPMDNCYHYFNGKALATFDTTSLIREVVYVEAPLDTDQDGQLDLIKVNIIRPKASTAIPSMMTASPYHQGINETANDKKLHRMEGELSPKAPRRITVEPTDFQPLATKPSRLPVNECQETFSHISSYTLNDYFLARGFANLYVSGVGTAGSTGFMTSGDYAQIESFKAVIDWLNGRATAYTSHKRDYQIKADWSNGLVATTGKSYLGTMSTGLATTGVDGLAVIIAEAAISSWYDYYRENGLVCSPGGYPGEDLDVLTELTYSRNLLPGDYLRHNDHYQQLLSQQSQALERQSGNYNQFWHDRNYLPQADRIKCEVVYTHGLQDWNVKPRQVYNIFNALPDSLGKHLFLHHGEHVYMHNWQSIDFREAMNALLCQKMLGQNNGFTLPTIIWQDNQKEQTWKELTAFGGHSKRQIALGDDHVLIDNHYGEEDFKRYSKDFRAFKAELFEGKANQAVIDILLEEDLPINGQACLKLKLKSSENKGILAAQLLDYGKKKRFADIPAILELDSIDNGQQFAREALKELPFKDSPYRVVTKGVLNLQHRSDLLTIEDIPNDQWMTITFHLQPTIYHMAKGDTLRVVLYTTDFEHTIRDNSNYALTLDLEQSYLLIPTDEEE.

Residues S349, D469, and H499 each act as charge relay system in the active site.

The protein belongs to the peptidase S15 family. As to quaternary structure, homodimer.

It is found in the cytoplasm. It carries out the reaction Hydrolyzes Xaa-Pro-|- bonds to release unblocked, N-terminal dipeptides from substrates including Ala-Pro-|-p-nitroanilide and (sequentially) Tyr-Pro-|-Phe-Pro-|-Gly-Pro-|-Ile.. Its function is as follows. Removes N-terminal dipeptides sequentially from polypeptides having unsubstituted N-termini provided that the penultimate residue is proline. The chain is Xaa-Pro dipeptidyl-peptidase from Streptococcus equi subsp. equi (strain 4047).